Reading from the N-terminus, the 584-residue chain is Protein BONZAI 3 (584 aa).

Residues Met-1 to Pro-23 form a disordered region. A lipid anchor (N-myristoyl glycine) is attached at Gly-2. C2 domains lie at His-34–Leu-167 and Asn-178–Tyr-305. Ca(2+) contacts are provided by Asp-67, Asp-73, Asp-126, Asp-128, and Asp-145. A VWFA domain is found at Asn-344–Leu-563.

The protein belongs to the copine family. As to quaternary structure, interacts with BAP1 and BAP2. The cofactor is Ca(2+). Expressed at an extremely low level.

Its subcellular location is the cell membrane. Functionally, negative regulator of cell death and defense responses. Repress a number of R genes and may have effects in promoting growth and development. May function in membrane trafficking and in fusion of vesicles with plasma membrane. The chain is Protein BONZAI 3 (BON3) from Arabidopsis thaliana (Mouse-ear cress).